Reading from the N-terminus, the 331-residue chain is Phosphate acyltransferase (331 aa).

This sequence belongs to the PlsX family. As to quaternary structure, homodimer. Probably interacts with PlsY.

It localises to the cytoplasm. It catalyses the reaction a fatty acyl-[ACP] + phosphate = an acyl phosphate + holo-[ACP]. It participates in lipid metabolism; phospholipid metabolism. Catalyzes the reversible formation of acyl-phosphate (acyl-PO(4)) from acyl-[acyl-carrier-protein] (acyl-ACP). This enzyme utilizes acyl-ACP as fatty acyl donor, but not acyl-CoA. In Ureaplasma parvum serovar 3 (strain ATCC 27815 / 27 / NCTC 11736), this protein is Phosphate acyltransferase.